The following is a 213-amino-acid chain: Thymidylate kinase (213 aa).

10-17 (GLEGAGKT) serves as a coordination point for ATP.

The protein belongs to the thymidylate kinase family.

The enzyme catalyses dTMP + ATP = dTDP + ADP. Phosphorylation of dTMP to form dTDP in both de novo and salvage pathways of dTTP synthesis. This chain is Thymidylate kinase, found in Salmonella choleraesuis (strain SC-B67).